Here is a 114-residue protein sequence, read N- to C-terminus: UPF0060 membrane protein GDI3492/Gdia_2889 (114 aa).

The next 4 membrane-spanning stretches (helical) occupy residues 8 to 28, 35 to 55, 64 to 84, and 92 to 112; these read FAVYAAAALCEIGGCYAWWCW, AWVLLPGMASLALFGWLLTLV, FAAYGGIYIVGAIVWLRLVEG, and AAGVAICLAGAAIILSAGRGA.

It belongs to the UPF0060 family.

The protein resides in the cell inner membrane. This is UPF0060 membrane protein GDI3492/Gdia_2889 from Gluconacetobacter diazotrophicus (strain ATCC 49037 / DSM 5601 / CCUG 37298 / CIP 103539 / LMG 7603 / PAl5).